The chain runs to 1356 residues: DNA-directed RNA polymerase subunit beta (1356 aa).

Belongs to the RNA polymerase beta chain family. In terms of assembly, the RNAP catalytic core consists of 2 alpha, 1 beta, 1 beta' and 1 omega subunit. When a sigma factor is associated with the core the holoenzyme is formed, which can initiate transcription.

It carries out the reaction RNA(n) + a ribonucleoside 5'-triphosphate = RNA(n+1) + diphosphate. DNA-dependent RNA polymerase catalyzes the transcription of DNA into RNA using the four ribonucleoside triphosphates as substrates. The sequence is that of DNA-directed RNA polymerase subunit beta from Phenylobacterium zucineum (strain HLK1).